We begin with the raw amino-acid sequence, 676 residues long: Mucin-1 (676 aa).

The signal sequence occupies residues 1–25 (MTPGIRAPFLLTLLLALVTDPNSVA). Residues 25–387 (ALSQDTSSSS…VHNGSLVPTT (363 aa)) form a disordered region. Over 26–582 (LSQDTSSSST…QSWPGVPGWG (557 aa)) the chain is Extracellular. 13 tandem repeats follow at residues 40–59 (PVHSGSSAPATSSAVDSATT), 60–79 (PGHSGSSAPPTSSAVNSATT), 80–99 (PGHSGSSAPPTSSAVNSATT), 100–119 (PVHSGSSAPVTSSAVNSATT), 120–139 (PVHSGSSAPPTSSAVNSATT), 140–159 (PVHSGSSAPVTSSAVNSATT), 160–179 (PVHSGSSAPVTSSAVDSATT), 180–199 (PVHSGSSAPPTSSAVNSATT), 200–219 (PVHSGSSAPVTSSAVNSATT), 220–239 (PVHSGSSAPVTSSAVNSATT), 240–259 (PVHSGSSAPPTSSVVNSATT), 260–279 (PVHSGSSAPPTSSAVNLATT), and 280–299 (PVHSGSSTPATNSTTDSATT). A 13 X approximate tandem repeats of P-V-H-S-G-S-S-A-P-P-T-S-S-A-V-N-S-A-T-T region spans residues 40–314 (PVHSGSSAPA…SSMQTTEAIS (275 aa)). Residues serine 43, serine 45, and serine 46 are each glycosylated (O-linked (GalNAc...) serine). The O-linked (GalNAc...) threonine glycan is linked to threonine 50. O-linked (GalNAc...) serine glycosylation is found at serine 51, serine 52, and serine 56. 2 O-linked (GalNAc...) threonine glycosylation sites follow: threonine 58 and threonine 59. 10 N-linked (GlcNAc...) asparagine glycosylation sites follow: asparagine 291, asparagine 323, asparagine 350, asparagine 380, asparagine 400, asparagine 413, asparagine 435, asparagine 479, asparagine 496, and asparagine 536. Residues 404–420 (TMATTTPVGNGTQSSVP) are compositionally biased toward polar residues. Residues 404-434 (TMATTTPVGNGTQSSVPSRHPVTPTPPAVSS) are disordered. In terms of domain architecture, SEA spans 463–570 (GVSFFLLSFH…INVGEMQFPS (108 aa)). A helical transmembrane segment spans residues 583–603 (IALLVLVCILVALAIVYLIAL). Residues 604 to 676 (AVCQCRRKNY…PVVATTSANL (73 aa)) are Cytoplasmic-facing. S-palmitoyl cysteine attachment occurs at residues cysteine 606 and cysteine 608. Residues 614-650 (GQLDIFPIQDSYHPMSEYPTYHTHGRYVPPGSTKRSP) form an interaction with P53 region. Phosphotyrosine; by PDGFR is present on tyrosine 625. The short motif at 625 to 628 (YHPM) is the Interaction with GRB2 element. Position 634 is a phosphotyrosine (tyrosine 634). The disordered stretch occupies residues 636-659 (THGRYVPPGSTKRSPYEEVSAGNG). A Phosphotyrosine; by PDGFR modification is found at tyrosine 640. Positions 645–652 (STKRSPYE) are required for interaction with GSK3B. Position 646 is a phosphothreonine; by PKC/PRKCD (threonine 646). Serine 649 is subject to Phosphoserine; by GSK3-beta. Tyrosine 651 is modified (phosphotyrosine; by CSK, EGFR and SRC). The short motif at 651–654 (YEEV) is the Interaction with SRC and ESR1 element. Positions 655–662 (SAGNGSSL) are required for interaction with beta- and gamma-catenins. A Phosphotyrosine modification is found at tyrosine 664. Residues 664–667 (YTNP) carry the Required for interaction with AP1S2 motif.

In terms of assembly, the alpha subunit forms a tight, non-covalent heterodimeric complex with the proteolytically-released beta-subunit. Binds directly the SH2 domain of GRB2, and forms a MUC1/GRB2/SOS1 complex involved in RAS signaling. The cytoplasmic tail (MUC1CT) interacts with several proteins such as SRC, CTNNB1 and ERBs. Interaction with the SH2 domain of CSK decreases interaction with GSK3B. Interacts with CTNNB1/beta-catenin and JUP/gamma-catenin and promotes cell adhesion. Interaction with JUP/gamma-catenin is induced by heregulin. Binds PRKCD, ERBB2, ERBB3 and ERBB4. Heregulin (HRG) stimulates the interaction with ERBB2 and, to a much lesser extent, the interaction with ERBB3 and ERBB4. Interacts with P53 in response to DNA damage. Interacts with KLF4. Interacts with estrogen receptor alpha/ESR1, through its DNA-binding domain, and stimulates its transcription activity. Binds ADAM17. Probably both N- and O-glycosylated (in repeat region). In terms of processing, proteolytic cleavage in the SEA domain occurs in the endoplasmic reticulum by an autoproteolytic mechanism and requires the full-length SEA domain as well as requiring a Ser, Thr or Cys residue at the P + 1 site. Ectodomain shedding is mediated by ADAM17 in uterine epithelial cells. Post-translationally, dual palmitoylation on cysteine residues in the CQC motif is required for recycling from endosomes back to the plasma membrane. Phosphorylated on tyrosines and serine residues in the C-terminal. Phosphorylation on tyrosines in the C-terminal increases the nuclear location of MUC1 and beta-catenin. Phosphorylation by PKC delta induces binding of MUC1 to beta-catenin/CTNNB1 and thus decreases the formation of the beta-catenin/E-cadherin complex. Src-mediated phosphorylation inhibits interaction with GSK3B. Csk- or Src- or EGFR-mediated phosphorylation on Tyr-651 increases binding to beta-catenin/CTNNB1. GSK3B-mediated phosphorylation on Ser-649 decreases this interaction but restores the formation of the beta-cadherin/E-cadherin complex. On T-cell receptor activation, phosphorylated by LCK. PDGFR-mediated phosphorylation increases nuclear colocalization of MUC1CT and CTNNB1.

The protein resides in the apical cell membrane. It localises to the cell membrane. It is found in the cytoplasm. The protein localises to the nucleus. Functionally, the alpha subunit has cell adhesive properties. Can act both as an adhesion and an anti-adhesion protein. May provide a protective layer on epithelial cells against bacterial and enzyme attack. The beta subunit contains a C-terminal domain which is involved in cell signaling, through phosphorylations and protein-protein interactions. Modulates signaling in ERK, Src and NF-kappaB pathways. In activated T-cells, influences directly or indirectly the Ras/MAPK pathway. Promotes tumor progression. Regulates P53-mediated transcription and determines cell fate in the genotoxic stress response. Binds, together with KLF4, the PE21 promoter element of P53 and represses P53 activity. This Mesocricetus auratus (Golden hamster) protein is Mucin-1 (MUC1).